Reading from the N-terminus, the 58-residue chain is Potassium channel toxin Ts16 (58 aa).

Residues 1–16 form the signal peptide; sequence MHSSVFILILFSLAVI. 3 cysteine pairs are disulfide-bonded: C29-C51, C34-C47, and C38-C53.

As to expression, expressed by the venom gland.

Its subcellular location is the secreted. Its function is as follows. Blocks potassium channels. This chain is Potassium channel toxin Ts16, found in Tityus serrulatus (Brazilian scorpion).